The primary structure comprises 487 residues: MGEPDPLVSGQLAARRSWCLRRLGMDREWLQLEAGSEVTIGRGFSVTYQLISKVCPLMISRNHCVLKQNPEGQWTIMDNKSLNGVWLNRERLAPLQGYCIRKGDHIQLGVPLESKEHAEYEYEVIEEDRESLAPCLAPKNDHTTEKHKGLRTKRKFSSDGVESLPAEGPSDLRCPLAKGSSKPAEPEKLHGKGEAASQPLGCLCPTLASLEASERTAGPHACSTLPKVLELYPKKQKACSPSASQSSLELFKMTMSRMLKLKTQMQEKQIAVLNVKRQARKGSSKKVVRMEKELRDLQSQLYAEQAQQQARVEQLEKTFQEEEQHLQGLEKEQGECDLKQQLLQALQEHRALMEELDRSKKDFEKIIQAKNKELERTKEEKDKVQAQKEEVLSHMNDVLENELQCIICSEYFIEAVTLNCAHSFCSFCISEWMKRKVECPICRKDIESRTNSLVLDNCISKMVERLSSDVKERRSVLIRERRAKRLL.

One can recognise an FHA domain in the interval 38-92 (VTIGRGFSVTYQLISKVCPLMISRNHCVLKQNPEGQWTIMDNKSLNGVWLNRERL). The segment at 68-72 (QNPEG) is required for interaction with PIWIL1. The disordered stretch occupies residues 135 to 195 (CLAPKNDHTT…PEKLHGKGEA (61 aa)). Serine 157 carries the phosphoserine modification. A compositionally biased stretch (basic and acidic residues) spans 184–193 (AEPEKLHGKG). The RING-type zinc-finger motif lies at 405–443 (CIICSEYFIEAVTLNCAHSFCSFCISEWMKRKVECPICR).

The protein belongs to the RNF8 family. As to quaternary structure, homodimer. Forms a E2-E3 ubiquitin ligase complex composed of the RNF8 homodimer and a E2 heterodimer of UBE2N and UBE2V2. Interacts with class III E2s, including UBE2E1, UBE2E2, and UBE2E3 and with UBE2N. Interacts with RXRA. Interacts (via FHA domain) with phosphorylated HERC2 (via C-terminus). Interacts with PIWIL1; leading to sequester RNF8 in the cytoplasm. Interacts with WRAP53/TCAB1. In terms of processing, autoubiquitinated through 'Lys-48' and 'Lys-63' of ubiquitin. 'Lys-63' polyubiquitination is mediated by UBE2N. 'Lys-29'-type polyubiquitination is also observed, but it doesn't require its own functional RING-type zinc finger.

The protein localises to the nucleus. It is found in the cytoplasm. Its subcellular location is the midbody. The protein resides in the chromosome. It localises to the telomere. It carries out the reaction S-ubiquitinyl-[E2 ubiquitin-conjugating enzyme]-L-cysteine + [acceptor protein]-L-lysine = [E2 ubiquitin-conjugating enzyme]-L-cysteine + N(6)-ubiquitinyl-[acceptor protein]-L-lysine.. The protein operates within protein modification; protein ubiquitination. Its function is as follows. E3 ubiquitin-protein ligase that plays a key role in DNA damage signaling via 2 distinct roles: by mediating the 'Lys-63'-linked ubiquitination of histones H2A and H2AX and promoting the recruitment of DNA repair proteins at double-strand breaks (DSBs) sites, and by catalyzing 'Lys-48'-linked ubiquitination to remove target proteins from DNA damage sites. Following DNA DSBs, it is recruited to the sites of damage by ATM-phosphorylated MDC1 and catalyzes the 'Lys-63'-linked ubiquitination of histones H2A and H2AX, thereby promoting the formation of TP53BP1 and BRCA1 ionizing radiation-induced foci (IRIF). Also controls the recruitment of UIMC1-BRCC3 (RAP80-BRCC36) and PAXIP1/PTIP to DNA damage sites. Promotes the recruitment of NBN to DNA damage sites by catalyzing 'Lys-6'-linked ubiquitination of NBN. Also recruited at DNA interstrand cross-links (ICLs) sites and catalyzes 'Lys-63'-linked ubiquitination of histones H2A and H2AX, leading to recruitment of FAAP20 and Fanconi anemia (FA) complex, followed by interstrand cross-link repair. H2A ubiquitination also mediates the ATM-dependent transcriptional silencing at regions flanking DSBs in cis, a mechanism to avoid collision between transcription and repair intermediates. Promotes the formation of 'Lys-63'-linked polyubiquitin chains via interactions with the specific ubiquitin-conjugating UBE2N/UBC13 and ubiquitinates non-histone substrates such as PCNA. Substrates that are polyubiquitinated at 'Lys-63' are usually not targeted for degradation. Also catalyzes the formation of 'Lys-48'-linked polyubiquitin chains via interaction with the ubiquitin-conjugating UBE2L6/UBCH8, leading to degradation of substrate proteins such as CHEK2, JMJD2A/KDM4A and KU80/XRCC5: it is still unclear how the preference toward 'Lys-48'- versus 'Lys-63'-linked ubiquitination is regulated but it could be due to RNF8 ability to interact with specific E2 specific ligases. For instance, interaction with phosphorylated HERC2 promotes the association between RNF8 and UBE2N/UBC13 and favors the specific formation of 'Lys-63'-linked ubiquitin chains. Promotes non-homologous end joining (NHEJ) by promoting the 'Lys-48'-linked ubiquitination and degradation the of KU80/XRCC5. Following DNA damage, mediates the ubiquitination and degradation of JMJD2A/KDM4A in collaboration with RNF168, leading to unmask H4K20me2 mark and promote the recruitment of TP53BP1 at DNA damage sites. Following DNA damage, mediates the ubiquitination and degradation of POLD4/p12, a subunit of DNA polymerase delta. In the absence of POLD4, DNA polymerase delta complex exhibits higher proofreading activity. In addition to its function in damage signaling, also plays a role in higher-order chromatin structure by mediating extensive chromatin decondensation. Involved in the activation of ATM by promoting histone H2B ubiquitination, which indirectly triggers histone H4 'Lys-16' acetylation (H4K16ac), establishing a chromatin environment that promotes efficient activation of ATM kinase. Required in the testis, where it plays a role in the replacement of histones during spermatogenesis. At uncapped telomeres, promotes the joining of deprotected chromosome ends by inducing H2A ubiquitination and TP53BP1 recruitment, suggesting that it may enhance cancer development by aggravating telomere-induced genome instability in case of telomeric crisis. Promotes the assembly of RAD51 at DNA DSBs in the absence of BRCA1 and TP53BP1 Also involved in class switch recombination in immune system, via its role in regulation of DSBs repair. May be required for proper exit from mitosis after spindle checkpoint activation and may regulate cytokinesis. May play a role in the regulation of RXRA-mediated transcriptional activity. Not involved in RXRA ubiquitination by UBE2E2. The sequence is that of E3 ubiquitin-protein ligase RNF8 from Rattus norvegicus (Rat).